A 715-amino-acid chain; its full sequence is Eosinophil peroxidase (715 aa).

The first 17 residues, 1 to 17 (MHLLPALAGVLATLVLA), serve as a signal peptide directing secretion. The propeptide occupies 18-139 (QPCEGTDPAS…SGCALRDQAE (122 aa)). Asn52 and Asn113 each carry an N-linked (GlcNAc...) asparagine glycan. Cys141 and Cys152 are disulfide-bonded. Asp232 contributes to the heme b binding site. Catalysis depends on His233, which acts as the Proton acceptor. Asp234 contributes to the Ca(2+) binding site. 2 cysteine pairs are disulfide-bonded: Cys253–Cys263 and Cys257–Cys281. Thr306, Phe308, Asp310, and Ser312 together coordinate Ca(2+). 2 N-linked (GlcNAc...) asparagine glycosylation sites follow: Asn327 and Asn363. A disulfide bridge links Cys359 with Cys370. Residues Glu380 and His474 each contribute to the heme b site. The residue at position 488 (Tyr488) is a 3'-nitrotyrosine. 2 disulfide bridges follow: Cys578-Cys635 and Cys676-Cys701. Asn700 and Asn708 each carry an N-linked (GlcNAc...) asparagine glycan.

The protein belongs to the peroxidase family. XPO subfamily. As to quaternary structure, tetramer of two light chains and two heavy chains. Ca(2+) serves as cofactor. Requires heme b as cofactor.

It is found in the cytoplasmic granule. The enzyme catalyses 2 a phenolic donor + H2O2 = 2 a phenolic radical donor + 2 H2O. In terms of biological role, mediates tyrosine nitration of secondary granule proteins in mature resting eosinophils. Shows significant inhibitory activity towards Mycobacterium tuberculosis H37Rv by inducing bacterial fragmentation and lysis. In Homo sapiens (Human), this protein is Eosinophil peroxidase (EPX).